The sequence spans 152 residues: Gamma-glutamylaminecyclotransferase C (152 aa).

Residue Y9–L12 participates in substrate binding. The Proton acceptor role is filled by E84.

Belongs to the gamma-glutamylcyclotransferase family.

It catalyses the reaction epsilon-(gamma-L-glutamyl)-L-lysine = 5-oxo-L-proline + L-lysine. Its function is as follows. May contribute to degradation of proteins cross-linked by transglutaminases by degrading the cross-link between a lysine and a glutamic acid residue. Catalyzes the formation of 5-oxo-L-proline from L-gamma-glutamyl-L-epsilon-lysine. This is Gamma-glutamylaminecyclotransferase C (ggact.3) from Danio rerio (Zebrafish).